A 579-amino-acid polypeptide reads, in one-letter code: 2-isopropylmalate synthase (579 aa).

Residues 40-314 form the Pyruvate carboxyltransferase domain; sequence PRWCAVDLRD…DPMIDFSDID (275 aa). Mg(2+) contacts are provided by D49, H253, H255, and N289. Positions 456 to 579 are regulatory domain; that stretch reads SDEEQAQWGR…VNRAVRDAQA (124 aa).

Belongs to the alpha-IPM synthase/homocitrate synthase family. LeuA type 2 subfamily. In terms of assembly, homodimer. The cofactor is Mg(2+).

It localises to the cytoplasm. The enzyme catalyses 3-methyl-2-oxobutanoate + acetyl-CoA + H2O = (2S)-2-isopropylmalate + CoA + H(+). It functions in the pathway amino-acid biosynthesis; L-leucine biosynthesis; L-leucine from 3-methyl-2-oxobutanoate: step 1/4. Its function is as follows. Catalyzes the condensation of the acetyl group of acetyl-CoA with 3-methyl-2-oxobutanoate (2-ketoisovalerate) to form 3-carboxy-3-hydroxy-4-methylpentanoate (2-isopropylmalate). This is 2-isopropylmalate synthase from Paenarthrobacter aurescens (strain TC1).